Consider the following 59-residue polypeptide: UPF0434 protein VIBHAR_01537 (59 aa).

The protein belongs to the UPF0434 family.

The protein is UPF0434 protein VIBHAR_01537 of Vibrio campbellii (strain ATCC BAA-1116).